The chain runs to 214 residues: MVRGKTQMKRIENATSRQVTFSKRRNGLLKKAFELSVLCDAEVSLIIFSPKGKLYEFASSNMQDTIDRYLRHTKDRVSTKPVSEENMQHLKYEAANMMKKIEQLEASKRKLLGEGIGTCSIEELQQIEQQLEKSVKCIRARKTQVFKEQIEQLKQKEKALAAENEKLSEKWGSHESEVWSNKNQESTGRGDEESSPSSEVETQLFIGLPCSSRK.

The 55-residue stretch at 3–57 folds into the MADS-box domain; sequence RGKTQMKRIENATSRQVTFSKRRNGLLKKAFELSVLCDAEVSLIIFSPKGKLYEF. One can recognise a K-box domain in the interval 87–177; the sequence is MQHLKYEAAN…SEKWGSHESE (91 aa). Residues 162 to 177 show a composition bias toward basic and acidic residues; that stretch reads AENEKLSEKWGSHESE. A disordered region spans residues 162 to 214; the sequence is AENEKLSEKWGSHESEVWSNKNQESTGRGDEESSPSSEVETQLFIGLPCSSRK. Positions 178-187 are enriched in polar residues; the sequence is VWSNKNQEST.

As to quaternary structure, forms a heterodimer with AGL24 through MADS-box domain. Interacts with AGL15, AGL16 and AGL19. Interacts with OXS3 in the nucleus. As to expression, widely expressed. Not found in the apical meristem of short-day grown plants in vegetative stage.

Its subcellular location is the nucleus. The protein localises to the cytoplasm. Its function is as follows. Transcription activator active in flowering time control. May integrate signals from the photoperiod, vernalization and autonomous floral induction pathways. Can modulate class B and C homeotic genes expression. When associated with AGL24, mediates effect of gibberellins on flowering under short-day conditions, and regulates the expression of LEAFY (LFY), which links floral induction and floral development. The chain is MADS-box protein SOC1 from Arabidopsis thaliana (Mouse-ear cress).